The following is a 348-amino-acid chain: Keratocan (348 aa).

The signal sequence occupies residues 1-26; that stretch reads MSRLNLTMEVLLVAFVAVFLTSQVHS. Residues 40–69 form the LRRNT domain; the sequence is ACPKECNCPPNFPNAVYCDNKGLKSIPVIP. Disulfide bonds link C41-C47 and C45-C57. LRR repeat units lie at residues 70–92, 93–118, 119–140, 141–163, 165–189, 190–213, 215–234, 235–260, 262–280, and 281–303; these read PYTWYLYLQNNLIDVLSANALRN, ATQLKWINLNRNKITTEGLEVDALRA, MSNLVHLYMEDNLLSSIPSPLP, AKLEQLRLSRNKISKIPPGVFSG, GHLTLLDLQSNKLQDDAVTEVSLKG, LNNLIQINLAKNQLNSMPLGLPPT, TQIFLDGNNIEKIPAEYFKG, LPKVASLRLNRNKLANGGIPKNVFNL, SILDLQLSHNQLTEVPVIS, and SGLEHLHLDHNKIKSVNSSDICP. An N-linked (GlcNAc...) (keratan sulfate) asparagine glycan is attached at N92. N259 is a glycosylation site (N-linked (GlcNAc...) (keratan sulfate) asparagine). An N-linked (GlcNAc...) asparagine glycan is attached at N297. C302 and C339 are oxidised to a cystine.

It belongs to the small leucine-rich proteoglycan (SLRP) family. SLRP class II subfamily. Post-translationally, glycosylated. Contains keratan sulfate chains. As to expression, expressed in eye, where it is found in the corneal epithelial layer and to a lesser extent in the stromal layer (at protein level).

It is found in the secreted. Its subcellular location is the extracellular space. The protein resides in the extracellular matrix. Functionally, may be important in developing and maintaining corneal transparency and for the structure of the stromal matrix. The protein is Keratocan of Danio rerio (Zebrafish).